The chain runs to 113 residues: Large ribosomal subunit protein bL17 (113 aa).

It belongs to the bacterial ribosomal protein bL17 family. As to quaternary structure, part of the 50S ribosomal subunit. Contacts protein L32.

The sequence is that of Large ribosomal subunit protein bL17 from Natranaerobius thermophilus (strain ATCC BAA-1301 / DSM 18059 / JW/NM-WN-LF).